Here is a 354-residue protein sequence, read N- to C-terminus: Cytoplasmic tRNA 2-thiolation protein 1 (354 aa).

This sequence belongs to the TtcA family. CTU1/NCS6/ATPBD3 subfamily.

Its subcellular location is the cytoplasm. The protein operates within tRNA modification; 5-methoxycarbonylmethyl-2-thiouridine-tRNA biosynthesis. Functionally, plays a central role in 2-thiolation of mcm(5)S(2)U at tRNA wobble positions of tRNA(Lys), tRNA(Glu) and tRNA(Gln). Directly binds tRNAs and probably acts by catalyzing adenylation of tRNAs, an intermediate required for 2-thiolation. It is unclear whether it acts as a sulfurtransferase that transfers sulfur from thiocarboxylated URM1 onto the uridine of tRNAs at wobble position. Prior mcm(5) tRNA modification by the elongator complex is required for 2-thiolation. May also be involved in protein urmylation. This Laccaria bicolor (strain S238N-H82 / ATCC MYA-4686) (Bicoloured deceiver) protein is Cytoplasmic tRNA 2-thiolation protein 1.